We begin with the raw amino-acid sequence, 281 residues long: ATP synthase gamma chain (281 aa).

This sequence belongs to the ATPase gamma chain family. In terms of assembly, F-type ATPases have 2 components, CF(1) - the catalytic core - and CF(0) - the membrane proton channel. CF(1) has five subunits: alpha(3), beta(3), gamma(1), delta(1), epsilon(1). CF(0) has three main subunits: a, b and c.

The protein localises to the cell inner membrane. Functionally, produces ATP from ADP in the presence of a proton gradient across the membrane. The gamma chain is believed to be important in regulating ATPase activity and the flow of protons through the CF(0) complex. This is ATP synthase gamma chain from Ehrlichia canis (strain Jake).